Reading from the N-terminus, the 208-residue chain is Large ribosomal subunit protein uL4 (208 aa).

Residues 50 to 83 form a disordered region; sequence VKTRAEVSGGGRKPWKQKGTGRARQGSIRAPQWK.

This sequence belongs to the universal ribosomal protein uL4 family. Part of the 50S ribosomal subunit.

In terms of biological role, one of the primary rRNA binding proteins, this protein initially binds near the 5'-end of the 23S rRNA. It is important during the early stages of 50S assembly. It makes multiple contacts with different domains of the 23S rRNA in the assembled 50S subunit and ribosome. Its function is as follows. Forms part of the polypeptide exit tunnel. The chain is Large ribosomal subunit protein uL4 from Mycoplasma mycoides subsp. mycoides SC (strain CCUG 32753 / NCTC 10114 / PG1).